The sequence spans 577 residues: Nuclear receptor subfamily 4 group A member 1 (577 aa).

The nuclear receptor DNA-binding region spans 243–318; sequence EGRCAVCGDN…VGMVKEVVRT (76 aa). NR C4-type zinc fingers lie at residues 246–266 and 282–311; these read CAVC…CEGC and CLAN…VVGM. A required for binding NBRE-containing DNA region spans residues 247-333; it reads AVCGDNASCQ…RRGRLPSKPK (87 aa). Positions 339 to 574 constitute an NR LBD domain; sequence SPVDLINSLV…PIVDKIFMDT (236 aa). A may bind lipopolysaccharide region spans residues 500–523; sequence PKKVEELQSQIINCLKEHIPSSMN. Positions 563–574 are AF-2; that stretch reads PPPIVDKIFMDT.

Belongs to the nuclear hormone receptor family. NR4 subfamily. The cofactor is Zn(2+).

Its subcellular location is the nucleus. It is found in the cytoplasm. The protein resides in the cytosol. In terms of biological role, orphan nuclear receptor. Binds the NGFI-B response element (NBRE) 5'-AAAAGGTCA-3'. In the cytosol, may detect bacterial lipopolysaccharide (LPS) and NBRE-containing mitochondrial DNA released during pyroptosis, and play a role in non-canonical inflammasome activation. This Xenopus laevis (African clawed frog) protein is Nuclear receptor subfamily 4 group A member 1 (nr4a1).